Consider the following 35-residue polypeptide: 3-hydroxyisobutyrate dehydrogenase (35 aa).

4-33 contacts NAD(+); the sequence is TPVGFIGLGNMGNPMAKNLMKHGYPLIIYD. Lys24 is subject to N6-acetyllysine; alternate. At Lys24 the chain carries N6-succinyllysine; alternate.

Belongs to the HIBADH-related family. 3-hydroxyisobutyrate dehydrogenase subfamily. Homodimer.

The protein localises to the mitochondrion. The catalysed reaction is 3-hydroxy-2-methylpropanoate + NAD(+) = 2-methyl-3-oxopropanoate + NADH + H(+). It participates in amino-acid degradation; L-valine degradation. The protein is 3-hydroxyisobutyrate dehydrogenase (HIBADH) of Oryctolagus cuniculus (Rabbit).